Here is a 377-residue protein sequence, read N- to C-terminus: Peroxisomal membrane protein PEX14 (377 aa).

Residues 1–20 (MASSEQAEQPSQPSSSPGSE) are compositionally biased toward low complexity. The tract at residues 1–23 (MASSEQAEQPSQPSSSPGSENVV) is disordered. Ala-2 bears the N-acetylalanine mark. Over 2-108 (ASSEQAEQPS…CSPGSSRWRD (107 aa)) the chain is Peroxisomal. Position 34 is an N6-acetyllysine (Lys-34). Residues 109 to 126 (YGALAIIMAGIAFGFHQL) form a helical membrane-spanning segment. Over 127–377 (YKKYLLPLIL…EGASNESERH (251 aa)) the chain is Cytoplasmic. A disordered region spans residues 230–377 (PPSPSAPKIP…EGASNESERH (148 aa)). Residue Ser-232 is modified to Phosphoserine. Composition is skewed to low complexity over residues 244 to 259 (PVKSPSPSSPAAVNHH) and 265 to 275 (SPVSNESTSSS). Phosphoserine is present on residues Ser-282 and Ser-335. A compositionally biased stretch (acidic residues) spans 323 to 342 (KEEEEEEEEEDVSHVDEEDV). Residues 360-377 (QVDKLRRPEGASNESERH) show a composition bias toward basic and acidic residues.

This sequence belongs to the peroxin-14 family. In terms of assembly, interacts with PEX13; forming the PEX13-PEX14 docking complex. Interacts with PEX5 (via WxxxF/Y motifs). Interacts with PEX19. Interacts with tubulin.

It localises to the peroxisome membrane. Functionally, component of the PEX13-PEX14 docking complex, a translocon channel that specifically mediates the import of peroxisomal cargo proteins bound to PEX5 receptor. The PEX13-PEX14 docking complex forms a large import pore which can be opened to a diameter of about 9 nm. Mechanistically, PEX5 receptor along with cargo proteins associates with the PEX14 subunit of the PEX13-PEX14 docking complex in the cytosol, leading to the insertion of the receptor into the organelle membrane with the concomitant translocation of the cargo into the peroxisome matrix. Plays a key role for peroxisome movement through a direct interaction with tubulin. The polypeptide is Peroxisomal membrane protein PEX14 (Cricetulus longicaudatus (Long-tailed dwarf hamster)).